The chain runs to 334 residues: Phosphate acyltransferase (334 aa).

Belongs to the PlsX family. In terms of assembly, homodimer. Probably interacts with PlsY.

The protein resides in the cytoplasm. It catalyses the reaction a fatty acyl-[ACP] + phosphate = an acyl phosphate + holo-[ACP]. Its pathway is lipid metabolism; phospholipid metabolism. Its function is as follows. Catalyzes the reversible formation of acyl-phosphate (acyl-PO(4)) from acyl-[acyl-carrier-protein] (acyl-ACP). This enzyme utilizes acyl-ACP as fatty acyl donor, but not acyl-CoA. The polypeptide is Phosphate acyltransferase (Caldicellulosiruptor bescii (strain ATCC BAA-1888 / DSM 6725 / KCTC 15123 / Z-1320) (Anaerocellum thermophilum)).